A 446-amino-acid polypeptide reads, in one-letter code: Alkylglycerol monooxygenase (446 aa).

2 helical membrane-spanning segments follow: residues 39 to 59 (VNQA…LGWL) and 103 to 123 (FHFL…FLGV). Residues 117–248 (WLAFLGVDMG…LIIWDRMFGT (132 aa)) form the Fatty acid hydroxylase domain. Positions 131-135 (HRFAH) match the Histidine box-1 motif. The short motif at 144 to 148 (HQVHH) is the Histidine box-2 element. A helical transmembrane segment spans residues 167-187 (FSSWIFYSPLALLIPPSVFAV). The short motif at 220-224 (HRVHH) is the Histidine box-3 element. 3 helical membrane-spanning segments follow: residues 329–349 (AWSP…LDVY), 362–382 (LTVI…GFLI), and 410–430 (PLLP…TIYW).

This sequence belongs to the sterol desaturase family. TMEM195 subfamily. Fe cation serves as cofactor.

Its subcellular location is the endoplasmic reticulum membrane. It carries out the reaction 1-O-(1,2-saturated-alkyl)-sn-glycerol + (6R)-L-erythro-5,6,7,8-tetrahydrobiopterin + O2 = a 1-(1-hydroxyalkyl)-sn-glycerol + (6R)-L-erythro-6,7-dihydrobiopterin + H2O. In terms of biological role, glyceryl-ether monooxygenase that cleaves the O-alkyl bond of ether lipids. Ether lipids are essential components of brain membranes. The sequence is that of Alkylglycerol monooxygenase (agmo) from Danio rerio (Zebrafish).